Reading from the N-terminus, the 79-residue chain is Protein RALF-like 35 (79 aa).

Positions 1 to 29 (MAAHKMSLTSLFFVSIVIVLSLFSGFGEG) are cleaved as a signal peptide. Intrachain disulfides connect Cys-45–Cys-52 and Cys-66–Cys-72. The N-linked (GlcNAc...) asparagine glycan is linked to Asn-68.

This sequence belongs to the plant rapid alkalinization factor (RALF) family.

It is found in the secreted. Its function is as follows. Cell signaling peptide that may regulate plant stress, growth, and development. Mediates a rapid alkalinization of extracellular space by mediating a transient increase in the cytoplasmic Ca(2+) concentration leading to a calcium-dependent signaling events through a cell surface receptor and a concomitant activation of some intracellular mitogen-activated protein kinases. The protein is Protein RALF-like 35 of Arabidopsis thaliana (Mouse-ear cress).